A 501-amino-acid polypeptide reads, in one-letter code: Aldehyde dehydrogenase, cytosolic 1 (501 aa).

Residue 246 to 251 (GSTEVG) coordinates NAD(+). The active-site Proton acceptor is the Glu-269. The Nucleophile role is filled by Cys-303.

It belongs to the aldehyde dehydrogenase family. Homotetramer. As to expression, eye specific, with very high expression in the lens.

It is found in the cytoplasm. The enzyme catalyses an aldehyde + NAD(+) + H2O = a carboxylate + NADH + 2 H(+). The protein operates within alcohol metabolism; ethanol degradation; acetate from ethanol: step 2/2. In terms of biological role, major component of the eye of elephant shrews, which in contrast to other mammals, possesses both a lens- and a non-lens class-1 aldehyde dehydrogenase 1. This eye-specific form is a structural protein of the lens and, in other part of the eye, serves as the major form of ALDH1. Can convert/oxidize retinaldehyde to retinoic acid. In Elephantulus edwardii (Cape long-eared elephant shrew), this protein is Aldehyde dehydrogenase, cytosolic 1 (ALDH1).